Consider the following 110-residue polypeptide: ATP synthase epsilon chain (110 aa).

This sequence belongs to the ATPase epsilon chain family. As to quaternary structure, F-type ATPases have 2 components, CF(1) - the catalytic core - and CF(0) - the membrane proton channel. CF(1) has five subunits: alpha(3), beta(3), gamma(1), delta(1), epsilon(1). CF(0) has three main subunits: a, b and c.

The protein localises to the cell inner membrane. Functionally, produces ATP from ADP in the presence of a proton gradient across the membrane. This chain is ATP synthase epsilon chain, found in Rickettsia typhi (strain ATCC VR-144 / Wilmington).